Here is a 67-residue protein sequence, read N- to C-terminus: uncharacterized protein (67 aa).

Belongs to the baculoviridae 8 kDa protein family.

This is an uncharacterized protein from Autographa californica nuclear polyhedrosis virus (AcMNPV).